The primary structure comprises 577 residues: Zinc finger-containing ubiquitin peptidase 1 (577 aa).

A C2H2-type 1 zinc finger spans residues 2 to 24; it reads LSCDICGETVTSEPDRKAHLIVH. A C2H2-type 2; atypical zinc finger spans residues 29 to 52; sequence IICPFCKLSGINYNEMCFHIETAH. 2 consecutive C2H2-type zinc fingers follow at residues 153–176 and 192–214; these read PECPFCGRIERYSQDMEIHVKTKH and YDCPMCGLVCTNYHILQEHVDLH. The segment at 225-247 is MIU; that stretch reads DRVQCSSDRELAHQLQQEEERKR. The span at 231–261 shows a compositional bias: basic and acidic residues; the sequence is SDRELAHQLQQEEERKRKSEESRQEREEFQK. Residues 231 to 262 form a disordered region; it reads SDRELAHQLQQEEERKRKSEESRQEREEFQKL. The interval 248-273 is zUBD/ZHA; sequence KSEESRQEREEFQKLQRQYGLDNSGG. Position 261 is an N6-acetyllysine (K261). C359 acts as the Nucleophile in catalysis. H490 serves as the catalytic Proton acceptor. Residue D511 is part of the active site.

It belongs to the peptidase C78 family. ZUFSP subfamily. Interacts with RPA1 and RPA2.

The protein resides in the cytoplasm. The protein localises to the nucleus. It carries out the reaction Thiol-dependent hydrolysis of ester, thioester, amide, peptide and isopeptide bonds formed by the C-terminal Gly of ubiquitin (a 76-residue protein attached to proteins as an intracellular targeting signal).. Functionally, deubiquitinase with endodeubiquitinase activity that specifically interacts with and cleaves 'Lys-63'-linked long polyubiquitin chains. Shows only weak activity against 'Lys-11' and 'Lys-48'-linked chains. Plays an important role in genome stability pathways, functioning to prevent spontaneous DNA damage and also promote cellular survival in response to exogenous DNA damage. Modulates the ubiquitination status of replication protein A (RPA) complex proteins in response to replication stress. This chain is Zinc finger-containing ubiquitin peptidase 1, found in Rattus norvegicus (Rat).